A 305-amino-acid polypeptide reads, in one-letter code: Ornithine carbamoyltransferase (305 aa).

Carbamoyl phosphate contacts are provided by residues 52-55 (STRT), glutamine 79, arginine 103, and 130-133 (HPLQ). L-ornithine is bound by residues asparagine 162, aspartate 224, and 228–229 (SM). Carbamoyl phosphate contacts are provided by residues 264–265 (CL) and arginine 292.

Belongs to the aspartate/ornithine carbamoyltransferase superfamily. OTCase family.

Its subcellular location is the cytoplasm. The catalysed reaction is carbamoyl phosphate + L-ornithine = L-citrulline + phosphate + H(+). It participates in amino-acid biosynthesis; L-arginine biosynthesis; L-arginine from L-ornithine and carbamoyl phosphate: step 1/3. Functionally, reversibly catalyzes the transfer of the carbamoyl group from carbamoyl phosphate (CP) to the N(epsilon) atom of ornithine (ORN) to produce L-citrulline. This is Ornithine carbamoyltransferase from Pyrobaculum islandicum (strain DSM 4184 / JCM 9189 / GEO3).